Here is a 989-residue protein sequence, read N- to C-terminus: Translation initiation factor IF-2 (989 aa).

2 disordered regions span residues 43–219 and 234–379; these read KRRR…LQAR and EARR…GGAR. Positions 72–87 are enriched in polar residues; that stretch reads NTPNKDTAVTQTATKN. Low complexity predominate over residues 105–146; sequence PKPVAAEATAQETSKAAPAAAQPVAEKEAAAPASAEAAKSAA. A compositionally biased stretch (basic and acidic residues) spans 149–159; that stretch reads VTDRGAKKTTE. Positions 160 to 171 are enriched in polar residues; the sequence is KNGANASGNRPS. Over residues 234 to 293 the composition is skewed to basic and acidic residues; that stretch reads EARRREDRLKQEADLEEQRRIEEKRRLEAEAKVEAEKQAALKEKEKAEAKARAKAEKEAK. Positions 294-303 are enriched in low complexity; that stretch reads AAQAKTAGAA. Residues 342–361 are compositionally biased toward basic and acidic residues; it reads PRREAPRPAMRDRKGEDRRQ. The 171-residue stretch at 489–659 folds into the tr-type G domain; sequence SRPPVVTIMG…LLQAEMLELK (171 aa). Residues 498-505 form a G1 region; sequence GHVDHGKT. GTP is bound at residue 498–505; that stretch reads GHVDHGKT. Residues 523-527 are G2; the sequence is GITQH. The tract at residues 545–548 is G3; sequence DTPG. GTP is bound by residues 545-549 and 599-602; these read DTPGH and NKMD. A G4 region spans residues 599 to 602; the sequence is NKMD. The segment at 635 to 637 is G5; that stretch reads SAA.

It belongs to the TRAFAC class translation factor GTPase superfamily. Classic translation factor GTPase family. IF-2 subfamily.

The protein resides in the cytoplasm. In terms of biological role, one of the essential components for the initiation of protein synthesis. Protects formylmethionyl-tRNA from spontaneous hydrolysis and promotes its binding to the 30S ribosomal subunits. Also involved in the hydrolysis of GTP during the formation of the 70S ribosomal complex. The protein is Translation initiation factor IF-2 of Zymomonas mobilis subsp. mobilis (strain ATCC 31821 / ZM4 / CP4).